Reading from the N-terminus, the 763-residue chain is Translation initiation factor IF-2, chloroplastic (763 aa).

3 disordered regions span residues 1–22 (MFLN…NNSS), 52–122 (IDKS…SNSA), and 149–168 (NNKI…DQSI). Residues 13-22 (SSYSTNNNSS) are compositionally biased toward low complexity. The span at 73–92 (RIDKKNKNFNKAHDLLDNKK) shows a compositional bias: basic and acidic residues. Basic residues predominate over residues 93-104 (NKNRQRKKIKNK). Residues 151–168 (KIPQQKKQQVASSIDQSI) show a composition bias toward polar residues. The tr-type G domain occupies 261–429 (NRPPVVTILG…ILLLAELENL (169 aa)). Residues 270-277 (GHVDHGKT), 316-320 (DTPGH), and 370-373 (SKID) contribute to the GTP site.

The protein belongs to the TRAFAC class translation factor GTPase superfamily. Classic translation factor GTPase family. IF-2 subfamily.

Its subcellular location is the plastid. The protein localises to the chloroplast. Functionally, one of the essential components for the initiation of protein synthesis. Protects formylmethionyl-tRNA from spontaneous hydrolysis and promotes its binding to the 30S ribosomal subunits. Also involved in the hydrolysis of GTP during the formation of the 70S ribosomal complex. This is Translation initiation factor IF-2, chloroplastic (infB) from Porphyra purpurea (Red seaweed).